The primary structure comprises 153 residues: Large ribosomal subunit protein uL22 (153 aa).

It belongs to the universal ribosomal protein uL22 family. Part of the 50S ribosomal subunit.

In terms of biological role, this protein binds specifically to 23S rRNA. It makes multiple contacts with different domains of the 23S rRNA in the assembled 50S subunit and ribosome. Functionally, the globular domain of the protein is located near the polypeptide exit tunnel on the outside of the subunit, while an extended beta-hairpin is found that lines the wall of the exit tunnel in the center of the 70S ribosome. This is Large ribosomal subunit protein uL22 from Methanocella arvoryzae (strain DSM 22066 / NBRC 105507 / MRE50).